Consider the following 646-residue polypeptide: Threonine--tRNA ligase (646 aa).

A TGS domain is found at 1 to 63 (MAQISLTFPD…EADAKIAIHT (63 aa)). The catalytic stretch occupies residues 247 to 544 (DHRKLGKEME…LIENYAGKLP (298 aa)). The Zn(2+) site is built by cysteine 344, histidine 395, and histidine 521.

The protein belongs to the class-II aminoacyl-tRNA synthetase family. In terms of assembly, homodimer. Zn(2+) is required as a cofactor.

Its subcellular location is the cytoplasm. It catalyses the reaction tRNA(Thr) + L-threonine + ATP = L-threonyl-tRNA(Thr) + AMP + diphosphate + H(+). Functionally, catalyzes the attachment of threonine to tRNA(Thr) in a two-step reaction: L-threonine is first activated by ATP to form Thr-AMP and then transferred to the acceptor end of tRNA(Thr). Also edits incorrectly charged L-seryl-tRNA(Thr). The protein is Threonine--tRNA ligase of Cereibacter sphaeroides (strain ATCC 17025 / ATH 2.4.3) (Rhodobacter sphaeroides).